The chain runs to 123 residues: Small ribosomal subunit protein uS12 (123 aa).

The residue at position 89 (D89) is a 3-methylthioaspartic acid.

Belongs to the universal ribosomal protein uS12 family. Part of the 30S ribosomal subunit. Contacts proteins S8 and S17. May interact with IF1 in the 30S initiation complex.

With S4 and S5 plays an important role in translational accuracy. Functionally, interacts with and stabilizes bases of the 16S rRNA that are involved in tRNA selection in the A site and with the mRNA backbone. Located at the interface of the 30S and 50S subunits, it traverses the body of the 30S subunit contacting proteins on the other side and probably holding the rRNA structure together. The combined cluster of proteins S8, S12 and S17 appears to hold together the shoulder and platform of the 30S subunit. This is Small ribosomal subunit protein uS12 from Syntrophobacter fumaroxidans (strain DSM 10017 / MPOB).